A 353-amino-acid chain; its full sequence is Putative ABC transporter ATP-binding protein MG303 homolog (353 aa).

Positions 72–312 constitute an ABC transporter domain; sequence LYFYNLSVFV…MQLLQRYEIT (241 aa). 107–114 is an ATP binding site; the sequence is GPSGSGKT.

It belongs to the ABC transporter superfamily.

The sequence is that of Putative ABC transporter ATP-binding protein MG303 homolog from Mycoplasma pneumoniae (strain ATCC 29342 / M129 / Subtype 1) (Mycoplasmoides pneumoniae).